Reading from the N-terminus, the 70-residue chain is Brevinin-1S (70 aa).

The first 22 residues, 1–22, serve as a signal peptide directing secretion; that stretch reads MFTLKKSLLLLFFLGTINLSLC. The propeptide occupies 23–44; sequence EEERNAEEERRDDPEERDVEVE. C64 and C70 are oxidised to a cystine.

Belongs to the frog skin active peptide (FSAP) family. Brevinin subfamily. In terms of tissue distribution, expressed by the skin glands.

It is found in the secreted. Antimicrobial peptide. The protein is Brevinin-1S of Odorrana schmackeri (Schmacker's frog).